Consider the following 526-residue polypeptide: MVRLSYVRFGVAWCIAIIIVSGFSNAASDNFYTPKNGWRSSSAGDILAWRSIDASGIKANVDLTVAYQILYRTSQNSPKNPQHSVTTILVPKNSVKNKLVVVGEAQDSNNANSVPSVGFVSGSRDSPNLVVDESLLVPYLQAGYIVTVPDSEGPLNAFTAGRSGGYQTLDSIRATLSFDKLSLNKNTTVAGFGYSGGGQAISWAAALQQSYAPEIHVAGWAFGGFIPNVTALVHHADSSRASGYAASAITGLVDAYPDLEKASKSLLTSDGQDMLDFVRSNPITEVVSKYANVDVLGSKFFKRDGGLFLSKAYRDVARQNMQGTSQNEVPHVPQYVYHAESDEVVPYNSALQTVQYWCRHGAKVEFVTYTDDKLNHNNTQVTGSQPVFTFIQRLLNGKKVSWDACSFVKENTGPSASSSAGGPHVVPIPTGGHHTQSGSAHGGHSSEHAASSTHAPAGTGHNTSGTGPHASSKPSPSLHPSTGATSPAPSSHRETSGGAAGFGARVASRRRAAPPRTMPAPPLMER.

Positions 1–26 (MVRLSYVRFGVAWCIAIIIVSGFSNA) are cleaved as a signal peptide. Asparagine 186 carries an N-linked (GlcNAc...) asparagine glycan. Serine 195 acts as the Nucleophile in catalysis. The N-linked (GlcNAc...) asparagine glycan is linked to asparagine 228. Active-site residues include aspartate 342 and histidine 376. The N-linked (GlcNAc...) asparagine glycan is linked to asparagine 377. A disordered region spans residues 412–526 (TGPSASSSAG…TMPAPPLMER (115 aa)). Low complexity-rich tracts occupy residues 413 to 423 (GPSASSSAGGP) and 430 to 457 (TGGHHTQSGSAHGGHSSEHAASSTHAPA). The N-linked (GlcNAc...) asparagine glycan is linked to asparagine 462. Over residues 480-490 (PSTGATSPAPS) the composition is skewed to low complexity. Residues 516–526 (RTMPAPPLMER) are compositionally biased toward pro residues.

The protein belongs to the AB hydrolase superfamily. Lipase family. Class Lip subfamily.

The protein localises to the secreted. The enzyme catalyses a triacylglycerol + H2O = a diacylglycerol + a fatty acid + H(+). It catalyses the reaction a monoacylglycerol + H2O = glycerol + a fatty acid + H(+). It carries out the reaction a diacylglycerol + H2O = a monoacylglycerol + a fatty acid + H(+). Functionally, secreted lipase that hydrolyzes acylglycerol lipids such as triacylglycerols and consequently releases free fatty acid. Can hydrolyze 4-nitrophenyl palmitate to release 4-nitrophenol and palmitoic acid. Due to an absence of fatty acid synthase genes in Malassezia species, secretory lipases are essential for the yeast to generate free fatty acids from degradation of sebum and assimilate them as lipid sources for growth. Plays important roles not only in lipid metabolism but also in the immune response of host cells and pathogenesis. The protein is Secreted triacylglycerol lipase LIP4 of Malassezia furfur (Pityriasis versicolor infection agent).